A 208-amino-acid polypeptide reads, in one-letter code: Component of Sp100-rs (208 aa).

The region spanning 6-121 (GSPRMSTEQE…LRRSFECGAK (116 aa)) is the HSR domain.

This is Component of Sp100-rs (Csprs) from Mus musculus (Mouse).